The sequence spans 549 residues: Glucose-6-phosphate isomerase (549 aa).

Glutamate 355 (proton donor) is an active-site residue. Residues histidine 387 and lysine 515 contribute to the active site.

It belongs to the GPI family.

Its subcellular location is the cytoplasm. The catalysed reaction is alpha-D-glucose 6-phosphate = beta-D-fructose 6-phosphate. Its pathway is carbohydrate biosynthesis; gluconeogenesis. It functions in the pathway carbohydrate degradation; glycolysis; D-glyceraldehyde 3-phosphate and glycerone phosphate from D-glucose: step 2/4. Its function is as follows. Catalyzes the reversible isomerization of glucose-6-phosphate to fructose-6-phosphate. This chain is Glucose-6-phosphate isomerase, found in Haemophilus influenzae (strain PittGG).